We begin with the raw amino-acid sequence, 384 residues long: Outer membrane protein assembly factor BamB (384 aa).

A signal peptide spans 1–16 (MKIRILVLILCALTQG). Cys17 carries N-palmitoyl cysteine lipidation. Cys17 is lipidated: S-diacylglycerol cysteine.

The protein belongs to the BamB family. Part of the Bam complex.

The protein resides in the cell outer membrane. Functionally, part of the outer membrane protein assembly complex, which is involved in assembly and insertion of beta-barrel proteins into the outer membrane. This Legionella pneumophila (strain Paris) protein is Outer membrane protein assembly factor BamB.